The following is a 209-amino-acid chain: Uracil phosphoribosyltransferase (209 aa).

5-phospho-alpha-D-ribose 1-diphosphate contacts are provided by residues Arg79, Arg104, and 131–139 (DPMLATGHT). Residues Ile194 and 199-201 (GDA) contribute to the uracil site. Asp200 is a binding site for 5-phospho-alpha-D-ribose 1-diphosphate.

Belongs to the UPRTase family. It depends on Mg(2+) as a cofactor.

It catalyses the reaction UMP + diphosphate = 5-phospho-alpha-D-ribose 1-diphosphate + uracil. The protein operates within pyrimidine metabolism; UMP biosynthesis via salvage pathway; UMP from uracil: step 1/1. Allosterically activated by GTP. Functionally, catalyzes the conversion of uracil and 5-phospho-alpha-D-ribose 1-diphosphate (PRPP) to UMP and diphosphate. The polypeptide is Uracil phosphoribosyltransferase (Caulobacter sp. (strain K31)).